A 148-amino-acid polypeptide reads, in one-letter code: UPF0260 protein KPK_1978 (148 aa).

Belongs to the UPF0260 family.

This Klebsiella pneumoniae (strain 342) protein is UPF0260 protein KPK_1978.